The chain runs to 377 residues: GDSL esterase/lipase 4 (377 aa).

The first 21 residues, 1-21, serve as a signal peptide directing secretion; that stretch reads MASPRFNSIIIILFICTISLS. S44 (nucleophile) is an active-site residue. N-linked (GlcNAc...) asparagine glycans are attached at residues N135, N188, N194, N207, and N241. Catalysis depends on residues D342 and H345. N364 carries N-linked (GlcNAc...) asparagine glycosylation.

The protein belongs to the 'GDSL' lipolytic enzyme family.

Its subcellular location is the secreted. This is GDSL esterase/lipase 4 (GLIP4) from Arabidopsis thaliana (Mouse-ear cress).